Consider the following 387-residue polypeptide: 26S proteasome regulatory subunit 6B homolog (387 aa).

175–182 (GPPGTGKT) is an ATP binding site.

Belongs to the AAA ATPase family. In terms of assembly, the 26S proteasome consists of a 20S proteasome core and two 19S regulatory subunits. The 20S proteasome core is composed of 28 subunits that are arranged in four stacked rings, resulting in a barrel-shaped structure. The two end rings are each formed by seven alpha subunits, and the two central rings are each formed by seven beta subunits. The catalytic chamber with the active sites is on the inside of the barrel.

It localises to the cytoplasm. The protein localises to the nucleus. Functionally, acts as a regulatory subunit of the 26S proteasome which degrades poly-ubiquitinated proteins in the cytoplasm and in the nucleus. It is essential for the regulated turnover of proteins and for the removal of misfolded proteins. The proteasome is a multicatalytic proteinase complex that is characterized by its ability to cleave peptides with Arg, Phe, Tyr, Leu, and Glu adjacent to the leaving group at neutral or slightly basic pH. The sequence is that of 26S proteasome regulatory subunit 6B homolog from Encephalitozoon cuniculi (strain GB-M1) (Microsporidian parasite).